The sequence spans 610 residues: Pentatricopeptide repeat-containing protein At3g15590, mitochondrial (610 aa).

A mitochondrion-targeting transit peptide spans 1 to 71; sequence MYSLSRILQR…FSRFFGIHKL (71 aa). A disordered region spans residues 88 to 142; it reads EELSESEEAVPVSGDVPEGVVDDDSLFEPELGSDNDDLEIEEKHSKDGGKPTKKR. Over residues 107–127 the composition is skewed to acidic residues; it reads VVDDDSLFEPELGSDNDDLEI. Positions 128–137 are enriched in basic and acidic residues; sequence EEKHSKDGGK. PPR repeat units follow at residues 241 to 275, 276 to 309, 310 to 344, 345 to 379, 380 to 410, 412 to 442, 447 to 481, 482 to 517, and 518 to 552; these read GEVV…KFPT, SVFA…NIKP, SRAT…GIEL, DPEL…GLQQ, TPWV…VDQN, RYDN…LVEK, PMMP…GIAI, GPST…KMRP, and MFTT…SYAA.

The protein belongs to the PPR family. P subfamily.

It is found in the mitochondrion. The chain is Pentatricopeptide repeat-containing protein At3g15590, mitochondrial from Arabidopsis thaliana (Mouse-ear cress).